The sequence spans 73 residues: MKPNIHPDYHQIYVVMTDGTKYTTRSTWGKEGDTLNLDIDPTTHPAWIGGSQTLVDRGGRVSKFKNRFGNLGV.

Belongs to the bacterial ribosomal protein bL31 family. Type A subfamily. In terms of assembly, part of the 50S ribosomal subunit.

Binds the 23S rRNA. The protein is Large ribosomal subunit protein bL31 of Bartonella bacilliformis (strain ATCC 35685 / KC583 / Herrer 020/F12,63).